Reading from the N-terminus, the 437-residue chain is Phosphoribosylamine--glycine ligase (437 aa).

The ATP-grasp domain occupies 109-316; it reads KDFLARHGIP…LLDLIEAALN (208 aa). 135 to 196 provides a ligand contact to ATP; that stretch reads VRQQGAPIVI…EEYLDGEEAS (62 aa). Residues glutamate 286 and asparagine 288 each contribute to the Mg(2+) site.

It belongs to the GARS family. Mg(2+) serves as cofactor. Requires Mn(2+) as cofactor.

The enzyme catalyses 5-phospho-beta-D-ribosylamine + glycine + ATP = N(1)-(5-phospho-beta-D-ribosyl)glycinamide + ADP + phosphate + H(+). The protein operates within purine metabolism; IMP biosynthesis via de novo pathway; N(1)-(5-phospho-D-ribosyl)glycinamide from 5-phospho-alpha-D-ribose 1-diphosphate: step 2/2. In Xylella fastidiosa (strain 9a5c), this protein is Phosphoribosylamine--glycine ligase.